The following is a 119-amino-acid chain: Ribonuclease P protein component (119 aa).

The protein belongs to the RnpA family. In terms of assembly, consists of a catalytic RNA component (M1 or rnpB) and a protein subunit.

It carries out the reaction Endonucleolytic cleavage of RNA, removing 5'-extranucleotides from tRNA precursor.. RNaseP catalyzes the removal of the 5'-leader sequence from pre-tRNA to produce the mature 5'-terminus. It can also cleave other RNA substrates such as 4.5S RNA. The protein component plays an auxiliary but essential role in vivo by binding to the 5'-leader sequence and broadening the substrate specificity of the ribozyme. The chain is Ribonuclease P protein component from Salmonella arizonae (strain ATCC BAA-731 / CDC346-86 / RSK2980).